Reading from the N-terminus, the 560-residue chain is MGDNLKKRSSMTTDGDNRAPNRAMLRAVGFTDEDFHKPMIGIASTWSEITPCNIHINKLAEKVKEGVREAGGVPQIYGTITVSDGIMMGHEGMHFSLPSREVIADSIEIVSNAMRHDGVIAIGGCDKNMPGCLMALCRIDAPSIFVYGGTILPGNCDGQDVDIVSIFEAVGKFNAGKISREEFIRIEQNAIPGAGSCGGMYTANTMSSAIEALGMSLPGSASMPAVSSRKANDCYEAGKALINLIQKGITPKQILTKKAFENAITVVLVLGGSTNAVLHLIAIAKEIGVGLTLDDFDRISKKTPHLADLKPGGKYAMTDLDKVGGVHGVMKYLLKEGMLHGDCLTVTGKTIAENLKDMPDLVPNQTIVRKKSEALHPSGPLVILKGNLAPDGAVAKISGLKKISITGPAKVFESEDDCFNAIMTDKIKPGDVIIIRYEGPKGGPGMREMLAVTSALVGKGLGEDVGLMTDGRFSGGTHGLVVGHISPEAFDGGPIAIVQNGDKVTIDSSKNLLQVEISQEEIDKRLKSWKPIEPRYKTGVLAKYVKLVQSATNGAITNLL.

Residues 1–20 (MGDNLKKRSSMTTDGDNRAP) are disordered. Position 52 (Cys52) interacts with [2Fe-2S] cluster. Asp84 is a Mg(2+) binding site. Cys125 contacts [2Fe-2S] cluster. Mg(2+) contacts are provided by Asp126 and Lys127. Lys127 is modified (N6-carboxylysine). Cys197 contributes to the [2Fe-2S] cluster binding site. Glu448 provides a ligand contact to Mg(2+). Catalysis depends on Ser474, which acts as the Proton acceptor.

It belongs to the IlvD/Edd family. Homodimer. It depends on [2Fe-2S] cluster as a cofactor. Mg(2+) is required as a cofactor.

It catalyses the reaction (2R)-2,3-dihydroxy-3-methylbutanoate = 3-methyl-2-oxobutanoate + H2O. It carries out the reaction (2R,3R)-2,3-dihydroxy-3-methylpentanoate = (S)-3-methyl-2-oxopentanoate + H2O. Its pathway is amino-acid biosynthesis; L-isoleucine biosynthesis; L-isoleucine from 2-oxobutanoate: step 3/4. It participates in amino-acid biosynthesis; L-valine biosynthesis; L-valine from pyruvate: step 3/4. In terms of biological role, functions in the biosynthesis of branched-chain amino acids. Catalyzes the dehydration of (2R,3R)-2,3-dihydroxy-3-methylpentanoate (2,3-dihydroxy-3-methylvalerate) into 2-oxo-3-methylpentanoate (2-oxo-3-methylvalerate) and of (2R)-2,3-dihydroxy-3-methylbutanoate (2,3-dihydroxyisovalerate) into 2-oxo-3-methylbutanoate (2-oxoisovalerate), the penultimate precursor to L-isoleucine and L-valine, respectively. This chain is Dihydroxy-acid dehydratase, found in Leptospira interrogans serogroup Icterohaemorrhagiae serovar Lai (strain 56601).